Here is an 81-residue protein sequence, read N- to C-terminus: Small ribosomal subunit protein uS17 (81 aa).

This sequence belongs to the universal ribosomal protein uS17 family. As to quaternary structure, part of the 30S ribosomal subunit.

In terms of biological role, one of the primary rRNA binding proteins, it binds specifically to the 5'-end of 16S ribosomal RNA. In Trichormus variabilis (strain ATCC 29413 / PCC 7937) (Anabaena variabilis), this protein is Small ribosomal subunit protein uS17.